The following is a 102-amino-acid chain: PqqA binding protein (102 aa).

It belongs to the PqqD family. In terms of assembly, monomer. Interacts with PqqE.

The protein operates within cofactor biosynthesis; pyrroloquinoline quinone biosynthesis. In terms of biological role, functions as a PqqA binding protein and presents PqqA to PqqE, in the pyrroloquinoline quinone (PQQ) biosynthetic pathway. This is PqqA binding protein from Rhodopseudomonas palustris (strain BisB5).